Reading from the N-terminus, the 188-residue chain is dTTP/UTP pyrophosphatase (188 aa).

Asp-70 functions as the Proton acceptor in the catalytic mechanism.

Belongs to the Maf family. YhdE subfamily. Requires a divalent metal cation as cofactor.

The protein localises to the cytoplasm. It catalyses the reaction dTTP + H2O = dTMP + diphosphate + H(+). It carries out the reaction UTP + H2O = UMP + diphosphate + H(+). Nucleoside triphosphate pyrophosphatase that hydrolyzes dTTP and UTP. May have a dual role in cell division arrest and in preventing the incorporation of modified nucleotides into cellular nucleic acids. The sequence is that of dTTP/UTP pyrophosphatase from Clostridium botulinum (strain Alaska E43 / Type E3).